We begin with the raw amino-acid sequence, 701 residues long: 1,4-alpha-glucan branching enzyme GlgB (701 aa).

Aspartate 381 acts as the Nucleophile in catalysis. The active-site Proton donor is glutamate 434.

It belongs to the glycosyl hydrolase 13 family. GlgB subfamily. In terms of assembly, monomer.

It catalyses the reaction Transfers a segment of a (1-&gt;4)-alpha-D-glucan chain to a primary hydroxy group in a similar glucan chain.. It participates in glycan biosynthesis; glycogen biosynthesis. Its function is as follows. Catalyzes the formation of the alpha-1,6-glucosidic linkages in glycogen by scission of a 1,4-alpha-linked oligosaccharide from growing alpha-1,4-glucan chains and the subsequent attachment of the oligosaccharide to the alpha-1,6 position. The protein is 1,4-alpha-glucan branching enzyme GlgB of Jannaschia sp. (strain CCS1).